Reading from the N-terminus, the 116-residue chain is Phosphoribosyl-ATP pyrophosphatase (116 aa).

Belongs to the PRA-PH family.

The protein resides in the cytoplasm. The enzyme catalyses 1-(5-phospho-beta-D-ribosyl)-ATP + H2O = 1-(5-phospho-beta-D-ribosyl)-5'-AMP + diphosphate + H(+). It participates in amino-acid biosynthesis; L-histidine biosynthesis; L-histidine from 5-phospho-alpha-D-ribose 1-diphosphate: step 2/9. In Bordetella avium (strain 197N), this protein is Phosphoribosyl-ATP pyrophosphatase.